The primary structure comprises 55 residues: Ribosome biogenesis protein Nop10 (55 aa).

Belongs to the NOP10 family.

Its function is as follows. Involved in ribosome biogenesis; more specifically in 18S rRNA pseudouridylation and in cleavage of pre-rRNA. The protein is Ribosome biogenesis protein Nop10 of Methanosphaera stadtmanae (strain ATCC 43021 / DSM 3091 / JCM 11832 / MCB-3).